A 711-amino-acid chain; its full sequence is DNA topoisomerase 3 (711 aa).

A Toprim domain is found at 2-135 (KSLILAEKPS…IRRLWISSVT (134 aa)). Positions 8 and 104 each coordinate Mg(2+). Positions 152–580 (YNDLYYAALA…EMKDFTKDVV (429 aa)) constitute a Topo IA-type catalytic domain. The interaction with DNA stretch occupies residues 186–191 (SLGRVQ). Tyr-305 functions as the O-(5'-phospho-DNA)-tyrosine intermediate in the catalytic mechanism. A disordered region spans residues 691 to 711 (MNKNEGLDNNPFKDALKNLNL).

It belongs to the type IA topoisomerase family. The cofactor is Mg(2+).

It catalyses the reaction ATP-independent breakage of single-stranded DNA, followed by passage and rejoining.. In terms of biological role, releases the supercoiling and torsional tension of DNA, which is introduced during the DNA replication and transcription, by transiently cleaving and rejoining one strand of the DNA duplex. Introduces a single-strand break via transesterification at a target site in duplex DNA. The scissile phosphodiester is attacked by the catalytic tyrosine of the enzyme, resulting in the formation of a DNA-(5'-phosphotyrosyl)-enzyme intermediate and the expulsion of a 3'-OH DNA strand. The free DNA strand then undergoes passage around the unbroken strand, thus removing DNA supercoils. Finally, in the religation step, the DNA 3'-OH attacks the covalent intermediate to expel the active-site tyrosine and restore the DNA phosphodiester backbone. The polypeptide is DNA topoisomerase 3 (Staphylococcus aureus (strain NCTC 8325 / PS 47)).